We begin with the raw amino-acid sequence, 273 residues long: MSGDKLLSELGYKLGRTIGEGSYSKVKVATSKKYKGTVAIKVVDRRRAPPDFVNKFLPRELSILRGVRHPHIVHVFEFIEVCNGKLYIVMEAAATDLLQAVQRNGRIPGSQARELFSQIAGAVRYLHDHHLVHRDLKCENVLLSPDERRVKITDFGFGRQAHGYPDLSTTYCGSAAYASPEVLLGIPYDPKKYDVWSLGVVLYVMVTGCMPFDDSDIAGLPRRQKRGVLYPDGLELSERCKSLIAELLQFSPSARPSAGQVARNGWLRAGDSG.

The Protein kinase domain occupies 12-267 (YKLGRTIGEG…AGQVARNGWL (256 aa)). ATP contacts are provided by residues 18-26 (IGEGSYSKV) and Lys41. The active-site Proton acceptor is the Asp135.

This sequence belongs to the protein kinase superfamily. CAMK Ser/Thr protein kinase family. In terms of assembly, microtubule inner protein component of sperm flagellar doublet microtubules. Interacts with HSP90; this interaction stabilizes and activates TSSK6. Interacts with the heat shock proteins HSPCB, HSPA8 and HSPA1A. These interactions appear to be required for TSSK6 kinase activity. Interacts with TSACC; this interaction is direct and recruits TSACC to HSP90, which is essential for kinase activity. Requires Mg(2+) as cofactor. In terms of processing, autophosphorylated. Ubiquitinated; HSP90 activity negatively regulates ubiquitination and degradation. As to expression, expressed in the testis, localized to the heads of elongating spermatids.

The protein resides in the cytoplasm. The protein localises to the cytoskeleton. It localises to the flagellum axoneme. Its subcellular location is the nucleus. The catalysed reaction is L-seryl-[protein] + ATP = O-phospho-L-seryl-[protein] + ADP + H(+). It carries out the reaction L-threonyl-[protein] + ATP = O-phospho-L-threonyl-[protein] + ADP + H(+). Functionally, serine/threonine-protein kinase component of the sperm flagellar doublet microtubules. May act as a regulator of sperm motility by mediating phosphorylation of sperm doublet microtubule proteins. Plays a role in DNA condensation during postmeiotic chromatin remodeling and histone-to-protamine transition during spermatogenesis. The sequence is that of Testis-specific serine/threonine-protein kinase 6 from Mus musculus (Mouse).